Consider the following 210-residue polypeptide: Putative 4-hydroxy-4-methyl-2-oxoglutarate aldolase (210 aa).

Substrate-binding positions include 87-90 (GDFV) and arginine 109. An a divalent metal cation-binding site is contributed by aspartate 110.

Belongs to the class II aldolase/RraA-like family. Homotrimer. The cofactor is a divalent metal cation.

The catalysed reaction is 4-hydroxy-4-methyl-2-oxoglutarate = 2 pyruvate. It catalyses the reaction oxaloacetate + H(+) = pyruvate + CO2. Catalyzes the aldol cleavage of 4-hydroxy-4-methyl-2-oxoglutarate (HMG) into 2 molecules of pyruvate. Also contains a secondary oxaloacetate (OAA) decarboxylase activity due to the common pyruvate enolate transition state formed following C-C bond cleavage in the retro-aldol and decarboxylation reactions. The protein is Putative 4-hydroxy-4-methyl-2-oxoglutarate aldolase of Halalkalibacterium halodurans (strain ATCC BAA-125 / DSM 18197 / FERM 7344 / JCM 9153 / C-125) (Bacillus halodurans).